Reading from the N-terminus, the 282-residue chain is Acetyl-coenzyme A carboxylase carboxyl transferase subunit beta (282 aa).

Residues Ile-28 to Ser-282 form the CoA carboxyltransferase N-terminal domain. Zn(2+) is bound by residues Cys-32, Cys-35, Cys-51, and Cys-54. Residues Cys-32 to Cys-54 form a C4-type zinc finger.

The protein belongs to the AccD/PCCB family. Acetyl-CoA carboxylase is a heterohexamer composed of biotin carboxyl carrier protein (AccB), biotin carboxylase (AccC) and two subunits each of ACCase subunit alpha (AccA) and ACCase subunit beta (AccD). It depends on Zn(2+) as a cofactor.

It localises to the cytoplasm. The catalysed reaction is N(6)-carboxybiotinyl-L-lysyl-[protein] + acetyl-CoA = N(6)-biotinyl-L-lysyl-[protein] + malonyl-CoA. Its pathway is lipid metabolism; malonyl-CoA biosynthesis; malonyl-CoA from acetyl-CoA: step 1/1. In terms of biological role, component of the acetyl coenzyme A carboxylase (ACC) complex. Biotin carboxylase (BC) catalyzes the carboxylation of biotin on its carrier protein (BCCP) and then the CO(2) group is transferred by the transcarboxylase to acetyl-CoA to form malonyl-CoA. In Halalkalibacterium halodurans (strain ATCC BAA-125 / DSM 18197 / FERM 7344 / JCM 9153 / C-125) (Bacillus halodurans), this protein is Acetyl-coenzyme A carboxylase carboxyl transferase subunit beta.